We begin with the raw amino-acid sequence, 795 residues long: Toll-like receptor 6 (795 aa).

The N-terminal stretch at 1–27 (MSQDRKPIVGSFHFVCALALIVGSMTP) is a signal peptide. Over 28–584 (FSNELESMVD…FHMSPLSCDT (557 aa)) the chain is Extracellular. Residue asparagine 42 is glycosylated (N-linked (GlcNAc...) asparagine). 19 LRR repeats span residues 54–77 (TKALSLSQNSISELRMPDISFLSE), 78–101 (LRVLRLSHNRIRSLDFHVFLFNQD), 102–125 (LEYLDVSHNRLQNISCCPMASLRH), 126–150 (LDLSFNDFDVLPVCKEFGNLTKLTF), 151–175 (LGLSAAKFRQLDLLPVAHLHLSCIL), 176–199 (LDLVSYHIKGGETESLQIPNTTVL), 200–223 (HLVFHPNSLFSVQVNMSVNALGHL), 224–250 (QLSNIKLNDENCQRLMTFLSELTRGPT), 251–278 (LLNVTLQHIETTWKCSVKLFQFFWPRPV), 279–308 (EYLNIYNLTITERIDREEFTYSETALKSLM), 309–337 (IEHVKNQVFLFSKEALYSVFAEMNIKMLS), 338–361 (ISDTPFIHMVCPPSPSSFTFLNFT), 362–388 (QNVFTDSVFQGCSTLKRLQTLILQRNG), 389–414 (LKNFFKVALMTKNMSSLETLDVSLNS), 415–437 (LNSHAYDRTCAWAESILVLNLSS), 438–457 (NMLTGSVFRCLPPKVKVLDL), 458–478 (HNNRIMSIPKDVTHLQALQEL), 479–500 (NVASNSLTDLPGCGAFSSLSVL), and 501–524 (VIDHNSVSHPSEDFFQSCQNIRSL). Asparagine 114 carries N-linked (GlcNAc...) asparagine glycosylation. A disulfide bond links cysteine 117 and cysteine 139. Residue asparagine 144 is glycosylated (N-linked (GlcNAc...) asparagine). N-linked (GlcNAc...) asparagine glycosylation is found at asparagine 195 and asparagine 214. Residues cysteine 235 and cysteine 265 are joined by a disulfide bond. N-linked (GlcNAc...) asparagine glycans are attached at residues asparagine 253 and asparagine 285. A disulfide bond links cysteine 348 and cysteine 373. The N-linked (GlcNAc...) asparagine glycan is linked to asparagine 359. Residues asparagine 401 and asparagine 434 are each glycosylated (N-linked (GlcNAc...) asparagine). A disulfide bridge connects residues cysteine 424 and cysteine 447. The region spanning 525 to 576 (TAGNNPFQCTCELRDFVKNIGWVAREVVEGWPDSYRCDYPESSKGTALRDFH) is the LRRCT domain. The helical transmembrane segment at 585-605 (VLLTVTIGATMLVLAVTGAFL) threads the bilayer. The Cytoplasmic portion of the chain corresponds to 606–795 (CLYFDLPWYV…ALVNEDDVKT (190 aa)). The 142-residue stretch at 640-781 (LQFHAFVSYS…LFWANLRASF (142 aa)) folds into the TIR domain.

The protein belongs to the Toll-like receptor family. Homodimer (via cytoplasmic TIR domain). Heterodimer with TLR2 via their respective extracellular domains. Binds MYD88 via their respective TIR domains. Interacts with CD36, following CD36 stimulation by oxLDL or amyloid-beta 42, and forms a heterodimer with TLR4. The trimeric complex is internalized and triggers inflammatory response. LYN kinase activity facilitates TLR4:TLR6 heterodimerization and signal initiation. The heterodimer TLR2:TLR6 interacts with CD14 and CD36 in response to triacylated lipopeptides. Detected in thymus, spleen, ovary and lung. Expressed in macrohpages.

Its subcellular location is the cell membrane. The protein resides in the cytoplasmic vesicle. It localises to the phagosome membrane. It is found in the membrane raft. The protein localises to the golgi apparatus. Functionally, participates in the innate immune response to Gram-positive bacteria and fungi. Specifically recognizes diacylated and, to a lesser extent, triacylated lipopeptides. In response to diacylated lipopeptides, forms the activation cluster TLR2:TLR6:CD14:CD36, this cluster triggers signaling from the cell surface and subsequently is targeted to the Golgi in a lipid-raft dependent pathway. Acts via MYD88 and TRAF6, leading to NF-kappa-B activation, cytokine secretion and the inflammatory response. Recognizes mycoplasmal macrophage-activating lipopeptide-2kD (MALP-2), soluble tuberculosis factor (STF), phenol-soluble modulin (PSM) and B.burgdorferi outer surface protein A lipoprotein (OspA-L) cooperatively with TLR2. In complex with TLR4, promotes sterile inflammation in monocytes/macrophages in response to oxidized low-density lipoprotein (oxLDL) or amyloid-beta 42. In this context, the initial signal is provided by oxLDL- or amyloid-beta 42-binding to CD36. This event induces the formation of a heterodimer of TLR4 and TLR6, which is rapidly internalized and triggers inflammatory response, leading to the NF-kappa-B-dependent production of CXCL1, CXCL2 and CCL9 cytokines, via MYD88 signaling pathway, and CCL5 cytokine, via TICAM1 signaling pathway, as well as IL1B secretion. The chain is Toll-like receptor 6 (Tlr6) from Mus musculus (Mouse).